A 455-amino-acid polypeptide reads, in one-letter code: Membrane protein Pbs54 (455 aa).

The helical transmembrane segment at 12-32 (IISIIILILRISLFSCAEHLF) threads the bilayer. N-linked (GlcNAc...) asparagine glycans are attached at residues N41, N102, and N125. Helical transmembrane passes span 181–201 (IFLI…LFNG), 220–240 (FIFF…LSCI), 244–264 (ILTF…FYLF), 285–305 (ILIG…IIFI), 312–332 (FLVK…IFFL), and 346–366 (FVFS…FWNI). An N-linked (GlcNAc...) asparagine glycan is attached at N373. A helical membrane pass occupies residues 398–418 (NMFALFMIFAMSILSIIFPRI).

It is found in the cell projection. The protein resides in the cilium. Its subcellular location is the flagellum. It localises to the cell membrane. In terms of biological role, plays a role in gamete fertilization. Required for the successful transmission of parasites to mosquito. This Plasmodium berghei (strain Anka) protein is Membrane protein Pbs54.